The following is a 347-amino-acid chain: tRNA N6-adenosine threonylcarbamoyltransferase (347 aa).

His111 and His115 together coordinate Fe cation. Substrate contacts are provided by residues 133-137 (LASGG), Asp166, Gly179, and Asn278. Asp306 contacts Fe cation.

This sequence belongs to the KAE1 / TsaD family. Fe(2+) is required as a cofactor.

It is found in the cytoplasm. It carries out the reaction L-threonylcarbamoyladenylate + adenosine(37) in tRNA = N(6)-L-threonylcarbamoyladenosine(37) in tRNA + AMP + H(+). Its function is as follows. Required for the formation of a threonylcarbamoyl group on adenosine at position 37 (t(6)A37) in tRNAs that read codons beginning with adenine. Is involved in the transfer of the threonylcarbamoyl moiety of threonylcarbamoyl-AMP (TC-AMP) to the N6 group of A37, together with TsaE and TsaB. TsaD likely plays a direct catalytic role in this reaction. The protein is tRNA N6-adenosine threonylcarbamoyltransferase of Paramagnetospirillum magneticum (strain ATCC 700264 / AMB-1) (Magnetospirillum magneticum).